Here is a 136-residue protein sequence, read N- to C-terminus: Piercer of microtubule wall 1 protein (136 aa).

A compositionally biased stretch (basic and acidic residues) spans 1–16; that stretch reads MSEEDPKACAEPEEPK. The tract at residues 1–27 is disordered; it reads MSEEDPKACAEPEEPKAGPPPEKTSDW.

The protein belongs to the PIERCE1 family. Microtubule inner protein component of sperm flagellar doublet microtubules. Interacts with CFAP53, ODAD1 and ODAD3; the interactions link the outer dynein arms docking complex (ODA-DC) to the internal microtubule inner proteins (MIP) in cilium axoneme. Expressed in trachea multiciliated cells.

It is found in the cytoplasm. The protein localises to the cytoskeleton. The protein resides in the cilium axoneme. Its subcellular location is the flagellum axoneme. Microtubule inner protein involved in the attachment of outer dynein arms (ODAs) to dynein-decorated doublet microtubules (DMTs) in cilia axoneme, which is required for motile cilia beating. Functions at the initial step of left-right asymmetry specification of the visceral organs. This Bos taurus (Bovine) protein is Piercer of microtubule wall 1 protein (PIERCE1).